The sequence spans 167 residues: Endoribonuclease YbeY (167 aa).

Zn(2+) is bound by residues His131, His135, and His141.

Belongs to the endoribonuclease YbeY family. It depends on Zn(2+) as a cofactor.

It localises to the cytoplasm. In terms of biological role, single strand-specific metallo-endoribonuclease involved in late-stage 70S ribosome quality control and in maturation of the 3' terminus of the 16S rRNA. The chain is Endoribonuclease YbeY from Rickettsia felis (strain ATCC VR-1525 / URRWXCal2) (Rickettsia azadi).